The following is a 153-amino-acid chain: UPF0178 protein Ccel_2994 (153 aa).

It belongs to the UPF0178 family.

The sequence is that of UPF0178 protein Ccel_2994 from Ruminiclostridium cellulolyticum (strain ATCC 35319 / DSM 5812 / JCM 6584 / H10) (Clostridium cellulolyticum).